A 370-amino-acid chain; its full sequence is Ribosomal RNA small subunit methyltransferase H (370 aa).

Residues 85–87 (GGH), Asp104, Tyr131, Asp152, and Gln159 each bind S-adenosyl-L-methionine. 2 stretches are compositionally biased toward basic and acidic residues: residues 332–345 (GAER…ERNP) and 353–370 (RALE…RDAR). Residues 332-370 (GAERATPEEIERNPRSAPVRLRALEKVAGRPTTARRDAR) are disordered.

The protein belongs to the methyltransferase superfamily. RsmH family.

Its subcellular location is the cytoplasm. It carries out the reaction cytidine(1402) in 16S rRNA + S-adenosyl-L-methionine = N(4)-methylcytidine(1402) in 16S rRNA + S-adenosyl-L-homocysteine + H(+). Specifically methylates the N4 position of cytidine in position 1402 (C1402) of 16S rRNA. This is Ribosomal RNA small subunit methyltransferase H from Mycobacterium sp. (strain KMS).